The primary structure comprises 257 residues: Hydroxyacylglutathione hydrolase (257 aa).

Zn(2+)-binding residues include His54, His56, Asp58, His59, His113, Asp137, and His175.

This sequence belongs to the metallo-beta-lactamase superfamily. Glyoxalase II family. In terms of assembly, monomer. It depends on Zn(2+) as a cofactor.

It catalyses the reaction an S-(2-hydroxyacyl)glutathione + H2O = a 2-hydroxy carboxylate + glutathione + H(+). The protein operates within secondary metabolite metabolism; methylglyoxal degradation; (R)-lactate from methylglyoxal: step 2/2. Thiolesterase that catalyzes the hydrolysis of S-D-lactoyl-glutathione to form glutathione and D-lactic acid. The chain is Hydroxyacylglutathione hydrolase from Acaryochloris marina (strain MBIC 11017).